Here is a 163-residue protein sequence, read N- to C-terminus: MMNRVMHYFKSLLLLELLAGLWLTLKYTFRPKYTVLYPMEKFPQSPRFRGLHALRRYPNGEERCIACKLCEAVCPALAITIDSAKREDGTRRTTRYDIDLFKCIFCGFCEESCPVDSIVETHILEYHFEKRGENIVTKPQLLAIGDRFEAEIAERRAADAAFR.

4Fe-4S ferredoxin-type domains follow at residues 54–84 and 94–123; these read LRRYPNGEERCIACKLCEAVCPALAITIDSA and TRYDIDLFKCIFCGFCEESCPVDSIVETHI. Residues Cys64, Cys67, Cys70, Cys74, Cys103, Cys106, Cys109, and Cys113 each contribute to the [4Fe-4S] cluster site.

It belongs to the complex I 23 kDa subunit family. NDH-1 is composed of 14 different subunits. Subunits NuoA, H, J, K, L, M, N constitute the membrane sector of the complex. It depends on [4Fe-4S] cluster as a cofactor.

It localises to the cell inner membrane. It catalyses the reaction a quinone + NADH + 5 H(+)(in) = a quinol + NAD(+) + 4 H(+)(out). Functionally, NDH-1 shuttles electrons from NADH, via FMN and iron-sulfur (Fe-S) centers, to quinones in the respiratory chain. The immediate electron acceptor for the enzyme in this species is believed to be ubiquinone. Couples the redox reaction to proton translocation (for every two electrons transferred, four hydrogen ions are translocated across the cytoplasmic membrane), and thus conserves the redox energy in a proton gradient. This is NADH-quinone oxidoreductase subunit I from Xylella fastidiosa (strain 9a5c).